Reading from the N-terminus, the 138-residue chain is Translation initiation factor 5A (138 aa).

Lysine 42 carries the post-translational modification Hypusine.

It belongs to the eIF-5A family.

The protein localises to the cytoplasm. Functionally, functions by promoting the formation of the first peptide bond. The sequence is that of Translation initiation factor 5A (eif5a) from Pyrobaculum aerophilum (strain ATCC 51768 / DSM 7523 / JCM 9630 / CIP 104966 / NBRC 100827 / IM2).